Reading from the N-terminus, the 850-residue chain is Endoribonuclease ysh-1 (850 aa).

The Zn(2+) site is built by His83, His85, Asp87, His88, His173, and Asp194. Residue His442 is the Proton donor of the active site. Residue His464 coordinates Zn(2+). Disordered stretches follow at residues 685–708 (VKRSATKNPHTHSPLPADKNPHSH) and 732–784 (SPIV…EQQL). Residues 744 to 754 (PTTKAITSPSE) are compositionally biased toward polar residues. Positions 755–766 (ETAKSSDVKSDA) are enriched in basic and acidic residues. Positions 767-781 (DADASMDVSEEDEDE) are enriched in acidic residues.

Belongs to the metallo-beta-lactamase superfamily. RNA-metabolizing metallo-beta-lactamase-like family. CPSF2/YSH1 subfamily.

The protein resides in the nucleus. Component of the cleavage factor I (CF I) involved in pre-mRNA 3'-end processing. This chain is Endoribonuclease ysh-1 (ysh-1), found in Neurospora crassa (strain ATCC 24698 / 74-OR23-1A / CBS 708.71 / DSM 1257 / FGSC 987).